We begin with the raw amino-acid sequence, 303 residues long: Heme A synthase (303 aa).

Residues 1-8 (MFGKKNLK) lie on the Cytoplasmic side of the membrane. The chain crosses the membrane as a helical span at residues 9–29 (WLGVVATLMMTFVQLGGALVT). The Extracellular segment spans residues 30–67 (KTGSADGCGSSWPLCHGALIPEFFPIDTIIELSHRAVS). The cysteines at positions 37 and 44 are disulfide-linked. Glutamate 60 is an active-site residue. Heme o is bound at residue histidine 63. Residues 68–88 (ALSLLMVLWLVITAWKHIGYI) traverse the membrane as a helical segment. At 89–93 (KEIKP) the chain is on the cytoplasmic side. A helical transmembrane segment spans residues 94–114 (LSIISVGFLLLQALIGAAAVI). The Extracellular segment spans residues 115 to 125 (WQQNDYVLALH). Histidine 125 contacts heme o. Residues 126–146 (FGISLISFSSVFLITLIIFSI) form a helical membrane-spanning segment. The Cytoplasmic segment spans residues 147-163 (DQKYEADELYIKKPLRR). Residues 164–184 (LTWLMAIIIYCGVYTGALVRH) traverse the membrane as a helical segment. Residues 185–215 (ADASLAYGGWPLPFHDLVPHSEQDWVQLTHR) are Extracellular-facing. Histidine 214 lines the heme b pocket. A helical transmembrane segment spans residues 216–236 (IMAFIVFTIIMITYIHAVKNY). The Cytoplasmic segment spans residues 237 to 244 (PNNRTVHY). The chain crosses the membrane as a helical span at residues 245 to 265 (GYTAAFILVILQVITGALSIM). The Extracellular portion of the chain corresponds to 266-270 (TNVNL). The chain crosses the membrane as a helical span at residues 271–291 (LIALFHALFITYLFGMTTYFI). Histidine 276 is a binding site for heme b. Topologically, residues 292 to 303 (MLMLRSVRSDKQ) are cytoplasmic.

This sequence belongs to the COX15/CtaA family. Type 1 subfamily. Interacts with CtaB. It depends on heme b as a cofactor.

The protein resides in the cell membrane. The enzyme catalyses Fe(II)-heme o + 2 A + H2O = Fe(II)-heme a + 2 AH2. Its pathway is porphyrin-containing compound metabolism; heme A biosynthesis; heme A from heme O: step 1/1. Catalyzes the conversion of heme O to heme A by two successive hydroxylations of the methyl group at C8. The first hydroxylation forms heme I, the second hydroxylation results in an unstable dihydroxymethyl group, which spontaneously dehydrates, resulting in the formyl group of heme A. This is Heme A synthase from Staphylococcus aureus (strain MSSA476).